The primary structure comprises 201 residues: Peptidyl-tRNA hydrolase (201 aa).

TRNA is bound at residue Tyr-15. The Proton acceptor role is filled by His-20. TRNA is bound by residues Tyr-66, Asn-68, and Asn-114.

It belongs to the PTH family. Monomer.

It is found in the cytoplasm. It carries out the reaction an N-acyl-L-alpha-aminoacyl-tRNA + H2O = an N-acyl-L-amino acid + a tRNA + H(+). Hydrolyzes ribosome-free peptidyl-tRNAs (with 1 or more amino acids incorporated), which drop off the ribosome during protein synthesis, or as a result of ribosome stalling. Functionally, catalyzes the release of premature peptidyl moieties from peptidyl-tRNA molecules trapped in stalled 50S ribosomal subunits, and thus maintains levels of free tRNAs and 50S ribosomes. This is Peptidyl-tRNA hydrolase from Burkholderia thailandensis (strain ATCC 700388 / DSM 13276 / CCUG 48851 / CIP 106301 / E264).